Here is a 377-residue protein sequence, read N- to C-terminus: tRNA pseudouridine synthase Pus10 (377 aa).

Aspartate 206 serves as the catalytic Nucleophile. 2 residues coordinate substrate: tyrosine 270 and tyrosine 339.

The protein belongs to the pseudouridine synthase Pus10 family.

It carries out the reaction uridine(54) in tRNA = pseudouridine(54) in tRNA. It catalyses the reaction uridine(55) in tRNA = pseudouridine(55) in tRNA. In terms of biological role, responsible for synthesis of pseudouridine from uracil-54 and uracil-55 in the psi GC loop of transfer RNAs. This chain is tRNA pseudouridine synthase Pus10, found in Picrophilus torridus (strain ATCC 700027 / DSM 9790 / JCM 10055 / NBRC 100828 / KAW 2/3).